A 186-amino-acid polypeptide reads, in one-letter code: Glutathione S-transferase 1, isoform A (186 aa).

In terms of domain architecture, GST N-terminal spans Met1 to Asp81. Glutathione is bound by residues Ser9, His50 to Ile52, and Glu65 to Arg67. The 95-residue stretch at Asp92–Ile186 folds into the GST C-terminal domain.

The protein belongs to the GST superfamily. Theta family. Homodimer.

The catalysed reaction is RX + glutathione = an S-substituted glutathione + a halide anion + H(+). Functionally, conjugation of reduced glutathione to a wide number of exogenous and endogenous hydrophobic electrophiles. This Anopheles gambiae (African malaria mosquito) protein is Glutathione S-transferase 1, isoform A.